The primary structure comprises 80 residues: Acyl carrier protein (80 aa).

In terms of domain architecture, Carrier spans 4 to 79; that stretch reads EEIFNKIKDL…DAVSYIKSHQ (76 aa). An O-(pantetheine 4'-phosphoryl)serine modification is found at Ser-39.

The protein belongs to the acyl carrier protein (ACP) family. Post-translationally, 4'-phosphopantetheine is transferred from CoA to a specific serine of apo-ACP by AcpS. This modification is essential for activity because fatty acids are bound in thioester linkage to the sulfhydryl of the prosthetic group.

Its subcellular location is the cytoplasm. It functions in the pathway lipid metabolism; fatty acid biosynthesis. Its function is as follows. Carrier of the growing fatty acid chain in fatty acid biosynthesis. The sequence is that of Acyl carrier protein from Lactobacillus acidophilus (strain ATCC 700396 / NCK56 / N2 / NCFM).